A 700-amino-acid polypeptide reads, in one-letter code: MRLLICALLCLGTLGLCLALPEKTIRWCVVSDHEATKCSSFRDNMKKVLPAGGPAVTCVRKMSHPECIRDISANKVDAVTVDGALVAEADLPHHSLKPIMAEYYGSKDDPKTHYYVVAMAKKGTGFQLNQLRGKKSCHTGLGWSAGWYVPLSTLLPSGSRETAAATFFSSSCVPCADGKMFPSLCQLCAGKGTDKCACSSREPYFGSWGALKCLQDGTADVSFVKHLTVFEAMPTKADRDQYELLCMDNTRRPVEEYEQCYLARVPSHVVVARSVDGKEDSIQELLRVAQEHFGKDKSSPFQLFGSPHGEDLLFTDAAHGLLRVPRKIDISLYLGYEFLSAFRNLKRGLEDSQRVKWCAVGQQERTKCDQWSAVSGGALACATEETPEDCIAATMKGEADAMSLDGGFAYVAGHCGLVPVLAENYLSTHSSGRLGSKCVNAPLEGYYVVAVVKKSDVGITWKSLQGKKSCHTAVGTSEGWNVPMGLIYNQTGSCKFDAFFSRSCAPGSDPDSPLCALCVGGNNPAHMCAANNAEGYHGSSGALRCLVEKGDVAFMKHPTVLQNTDGKNPEPWAKGLKHEDFELLCLDGTRKPVTEAQSCHLARVPNRAVFSRKDKADFVRRILFNQQELFGRNGFEYMMFQMFESSAKDLLFSDDTECLSNLQNKTTYKTYLGPQYLTLMDNFRQCLSSELLDACTFHKY.

Positions 1 to 19 (MRLLICALLCLGTLGLCLA) are cleaved as a signal peptide. Transferrin-like domains follow at residues 25-347 (IRWC…NLKR) and 355-685 (VKWC…NFRQ). Cystine bridges form between Cys-28/Cys-67, Cys-38/Cys-58, Cys-137/Cys-213, Cys-172/Cys-188, Cys-175/Cys-198, Cys-185/Cys-196, Cys-246/Cys-260, Cys-358/Cys-390, Cys-368/Cys-381, Cys-415/Cys-695, Cys-438/Cys-658, Cys-470/Cys-545, Cys-494/Cys-686, Cys-504/Cys-518, Cys-515/Cys-528, and Cys-585/Cys-599. An N-linked (GlcNAc...) asparagine glycan is attached at Asn-664.

This sequence belongs to the transferrin family. Monomer. Interacts (via transferrin-like domain 2) with CA2. Post-translationally, N-glycosylated. In terms of tissue distribution, detected in blood plasma, heart, kidney, liver, colon, lung, spleen, pancreas and testis (at protein level).

It localises to the secreted. In terms of biological role, inhibitor for carbonic anhydrase 2 (CA2). Does not bind iron ions. This is Inhibitor of carbonic anhydrase from Mus musculus (Mouse).